A 189-amino-acid polypeptide reads, in one-letter code: GTP cyclohydrolase 1 (189 aa).

Zn(2+) is bound by residues Cys-79, His-82, and Cys-151.

It belongs to the GTP cyclohydrolase I family. In terms of assembly, toroid-shaped homodecamer, composed of two pentamers of five dimers.

It carries out the reaction GTP + H2O = 7,8-dihydroneopterin 3'-triphosphate + formate + H(+). Its pathway is cofactor biosynthesis; 7,8-dihydroneopterin triphosphate biosynthesis; 7,8-dihydroneopterin triphosphate from GTP: step 1/1. The polypeptide is GTP cyclohydrolase 1 (Lactiplantibacillus plantarum (strain ATCC BAA-793 / NCIMB 8826 / WCFS1) (Lactobacillus plantarum)).